Reading from the N-terminus, the 84-residue chain is U7-ctenitoxin-Pn1a (84 aa).

A signal peptide spans 1-17; sequence MKLCILLVVLLITVVRA. The propeptide occupies 18-38; the sequence is EEDILENEAEDISPAIKERSA. 4 disulfide bridges follow: Cys-41–Cys-56, Cys-48–Cys-61, Cys-55–Cys-78, and Cys-63–Cys-76.

As to expression, expressed by the venom gland.

The protein localises to the secreted. Antagonist of L-type calcium channels (Cav1/CACNA1). Causes paralysis in the posterior limbs and gradual decreases in movement and aggression during 24 hours at dose levels of 5 ug per mouse. The protein is U7-ctenitoxin-Pn1a of Phoneutria nigriventer (Brazilian armed spider).